The sequence spans 376 residues: Flagellar P-ring protein (376 aa).

The N-terminal stretch at 1–29 (MTQRPFSLLSHLGRICLAAAMLAALPAQA) is a signal peptide.

Belongs to the FlgI family. As to quaternary structure, the basal body constitutes a major portion of the flagellar organelle and consists of four rings (L,P,S, and M) mounted on a central rod.

The protein localises to the periplasm. Its subcellular location is the bacterial flagellum basal body. Functionally, assembles around the rod to form the L-ring and probably protects the motor/basal body from shearing forces during rotation. This Bordetella avium (strain 197N) protein is Flagellar P-ring protein.